An 81-amino-acid chain; its full sequence is Large ribosomal subunit protein bL28 (81 aa).

Belongs to the bacterial ribosomal protein bL28 family. Part of the 50S ribosomal subunit.

In Deinococcus radiodurans (strain ATCC 13939 / DSM 20539 / JCM 16871 / CCUG 27074 / LMG 4051 / NBRC 15346 / NCIMB 9279 / VKM B-1422 / R1), this protein is Large ribosomal subunit protein bL28.